We begin with the raw amino-acid sequence, 485 residues long: Glutamate--tRNA ligase (485 aa).

A 'HIGH' region motif is present at residues 12–22; it reads PSPTGEPHVGT. Zn(2+) is bound by residues Cys109, Cys111, Cys136, and His138. The 'KMSKS' region motif lies at 253 to 257; that stretch reads KLSKR. Lys256 serves as a coordination point for ATP.

It belongs to the class-I aminoacyl-tRNA synthetase family. Glutamate--tRNA ligase type 1 subfamily. As to quaternary structure, monomer. Zn(2+) serves as cofactor.

The protein localises to the cytoplasm. It carries out the reaction tRNA(Glu) + L-glutamate + ATP = L-glutamyl-tRNA(Glu) + AMP + diphosphate. Catalyzes the attachment of glutamate to tRNA(Glu) in a two-step reaction: glutamate is first activated by ATP to form Glu-AMP and then transferred to the acceptor end of tRNA(Glu). This is Glutamate--tRNA ligase from Agrobacterium fabrum (strain C58 / ATCC 33970) (Agrobacterium tumefaciens (strain C58)).